Here is a 217-residue protein sequence, read N- to C-terminus: MSISAVVFDRDGVLTSFDWTRAEEDVRRITGLPLEEIERRWGGWLNGLTIDDAFVETQPISEFLSSLARELELGSKARDELVRLDYMAFAQGYPDARPALEEARRRGLKVGVLTNNSLLVSARSLLQCAALHDLVDVVLSSQMIGAAKPDPRAYQAIAEALGVSTTSCLFFDDIADWVEGARCAGMRAYLVDRSGQTRDGVVRDLSSLGAILDGAGP.

Asp9 serves as the catalytic Nucleophile.

It belongs to the HAD-like hydrolase superfamily.

Its function is as follows. Able to hydrolyze geranyl diphosphate (GPP), farnesyl diphosphate (FPP) and geranylgeranyl diphosphate (GGPP) to respectively yield geraniol, farnesol and geranylgeraniol. The polypeptide is Phosphatase MT3486 (Mycobacterium tuberculosis (strain CDC 1551 / Oshkosh)).